The primary structure comprises 739 residues: Phosphoribosylformylglycinamidine synthase subunit PurL (739 aa).

H54 is a catalytic residue. ATP contacts are provided by Y57 and K96. Position 98 (E98) interacts with Mg(2+). Residues 99–102 (SHNH) and R121 each bind substrate. The active-site Proton acceptor is H100. D122 serves as a coordination point for Mg(2+). Residue Q245 coordinates substrate. Residue D273 coordinates Mg(2+). A substrate-binding site is contributed by 317–319 (ESQ). Residues D500 and G537 each contribute to the ATP site. N538 is a Mg(2+) binding site. S540 serves as a coordination point for substrate.

The protein belongs to the FGAMS family. As to quaternary structure, monomer. Part of the FGAM synthase complex composed of 1 PurL, 1 PurQ and 2 PurS subunits.

The protein localises to the cytoplasm. The enzyme catalyses N(2)-formyl-N(1)-(5-phospho-beta-D-ribosyl)glycinamide + L-glutamine + ATP + H2O = 2-formamido-N(1)-(5-O-phospho-beta-D-ribosyl)acetamidine + L-glutamate + ADP + phosphate + H(+). Its pathway is purine metabolism; IMP biosynthesis via de novo pathway; 5-amino-1-(5-phospho-D-ribosyl)imidazole from N(2)-formyl-N(1)-(5-phospho-D-ribosyl)glycinamide: step 1/2. Its function is as follows. Part of the phosphoribosylformylglycinamidine synthase complex involved in the purines biosynthetic pathway. Catalyzes the ATP-dependent conversion of formylglycinamide ribonucleotide (FGAR) and glutamine to yield formylglycinamidine ribonucleotide (FGAM) and glutamate. The FGAM synthase complex is composed of three subunits. PurQ produces an ammonia molecule by converting glutamine to glutamate. PurL transfers the ammonia molecule to FGAR to form FGAM in an ATP-dependent manner. PurS interacts with PurQ and PurL and is thought to assist in the transfer of the ammonia molecule from PurQ to PurL. The chain is Phosphoribosylformylglycinamidine synthase subunit PurL from Bacillus cereus (strain ATCC 14579 / DSM 31 / CCUG 7414 / JCM 2152 / NBRC 15305 / NCIMB 9373 / NCTC 2599 / NRRL B-3711).